The primary structure comprises 195 residues: Large ribosomal subunit protein bL17 (195 aa).

The interval 132–195 (ARGTRFAARK…TEAKDTKPES (64 aa)) is disordered. Low complexity predominate over residues 159 to 186 (PTAAAVAAEAQAEQPTAEAVAADDAATT).

It belongs to the bacterial ribosomal protein bL17 family. Part of the 50S ribosomal subunit. Contacts protein L32.

This Parafrankia sp. (strain EAN1pec) protein is Large ribosomal subunit protein bL17.